Reading from the N-terminus, the 249-residue chain is MAERGELDLTGAKQNTGVWLVKVPKYLSQQWAKAPGRGEVGKLRIAKNQGRTEVSFTLNEDLANIHDIGGKPASVSAPREHPFVLQSVGGQTLTVFTESSSDKLSLEGIVVQRAECRPAASENYMKLKRLQIEESSKPVRLSQQADKVVTTNYKPVANHQYNIEYERKKKEDGKRARADKQHVLDMLFSAFEKHQYYNLKDLVDITKQPVGYLKEILKEIGIQNVKGIHKNTWELKPEYRHYQTEEKSD.

Residue Ala-2 is modified to N-acetylalanine. N6-acetyllysine is present on residues Lys-22, Lys-33, and Lys-137. Phosphoserine is present on Ser-142. 2 residues coordinate DNA: Gly-227 and His-229. Ser-248 bears the Phosphoserine mark.

Belongs to the TFIIF beta subunit family. Heterodimer of an alpha and a beta subunit. Interacts with HTATSF1 and GPBP1. Interacts with URI1. Interacts with GTF2B (via N-terminus); this interaction is inhibited in presence of GTF2F1. Part of TBP-based Pol II pre-initiation complex (PIC), in which Pol II core assembles with general transcription factors and other specific initiation factors including GTF2E1, GTF2E2, GTF2F1, GTF2F2, TCEA1, ERCC2, ERCC3, GTF2H2, GTF2H3, GTF2H4, GTF2H5, GTF2A1, GTF2A2, GTF2B and TBP; this large multi-subunit PIC complex mediates DNA unwinding and targets Pol II core to the transcription start site where the first phosphodiester bond forms.

The protein resides in the nucleus. In terms of biological role, TFIIF is a general transcription initiation factor that binds to RNA polymerase II and helps to recruit it to the initiation complex in collaboration with TFIIB. It promotes transcription elongation. The chain is General transcription factor IIF subunit 2 (Gtf2f2) from Rattus norvegicus (Rat).